A 298-amino-acid chain; its full sequence is ATP synthase gamma chain (298 aa).

It belongs to the ATPase gamma chain family. In terms of assembly, F-type ATPases have 2 components, CF(1) - the catalytic core - and CF(0) - the membrane proton channel. CF(1) has five subunits: alpha(3), beta(3), gamma(1), delta(1), epsilon(1). CF(0) has three main subunits: a, b and c.

It is found in the cell inner membrane. Functionally, produces ATP from ADP in the presence of a proton gradient across the membrane. The gamma chain is believed to be important in regulating ATPase activity and the flow of protons through the CF(0) complex. This Francisella philomiragia subsp. philomiragia (strain ATCC 25017 / CCUG 19701 / FSC 153 / O#319-036) protein is ATP synthase gamma chain.